The sequence spans 341 residues: UDP-N-acetylenolpyruvoylglucosamine reductase (341 aa).

The FAD-binding PCMH-type domain occupies 13–185 (FGVEQSCLSM…TAVGLRLPKA (173 aa)). R161 is a catalytic residue. The Proton donor role is filled by S231. The active site involves E327.

Belongs to the MurB family. It depends on FAD as a cofactor.

The protein resides in the cytoplasm. The catalysed reaction is UDP-N-acetyl-alpha-D-muramate + NADP(+) = UDP-N-acetyl-3-O-(1-carboxyvinyl)-alpha-D-glucosamine + NADPH + H(+). Its pathway is cell wall biogenesis; peptidoglycan biosynthesis. Cell wall formation. In Shewanella sp. (strain MR-4), this protein is UDP-N-acetylenolpyruvoylglucosamine reductase.